The sequence spans 128 residues: NHP2-like protein 1 (128 aa).

The interval 36-48 (RKGANEATKTLNR) is interaction with U4 snRNA and U4atac snRNA. Residues 96–128 (SRPVIACAVTIKEGSQLKPQIQSLQQSIERLLV) are important for U4 snRNA-binding.

It belongs to the eukaryotic ribosomal protein eL8 family. As to quaternary structure, identified in the spliceosome B complex. Component of the U4/U6-U5 tri-snRNP complex. Part of the small subunit (SSU) processome, composed of more than 70 proteins and the RNA chaperone small nucleolar RNA (snoRNA) U3.

It is found in the nucleus. It localises to the nucleolus. Functionally, part of the small subunit (SSU) processome, first precursor of the small eukaryotic ribosomal subunit. During the assembly of the SSU processome in the nucleolus, many ribosome biogenesis factors, an RNA chaperone and ribosomal proteins associate with the nascent pre-rRNA and work in concert to generate RNA folding, modifications, rearrangements and cleavage as well as targeted degradation of pre-ribosomal RNA by the RNA exosome. Involved in pre-mRNA splicing as component of the spliceosome. Binds to the 5'-stem-loop of U4 snRNA and thereby contributes to spliceosome assembly. The protein undergoes a conformational change upon RNA-binding. Core component of box C/D small nucleolar ribonucleoprotein (snoRNP) complexes that function in methylation of multiple sites on ribosomal RNAs (rRNAs) and messenger RNAs (mRNAs). This Xenopus tropicalis (Western clawed frog) protein is NHP2-like protein 1.